The primary structure comprises 377 residues: Anhydro-N-acetylmuramic acid kinase (377 aa).

ATP is bound at residue G19–D26.

This sequence belongs to the anhydro-N-acetylmuramic acid kinase family.

The enzyme catalyses 1,6-anhydro-N-acetyl-beta-muramate + ATP + H2O = N-acetyl-D-muramate 6-phosphate + ADP + H(+). Its pathway is amino-sugar metabolism; 1,6-anhydro-N-acetylmuramate degradation. The protein operates within cell wall biogenesis; peptidoglycan recycling. Its function is as follows. Catalyzes the specific phosphorylation of 1,6-anhydro-N-acetylmuramic acid (anhMurNAc) with the simultaneous cleavage of the 1,6-anhydro ring, generating MurNAc-6-P. Is required for the utilization of anhMurNAc either imported from the medium or derived from its own cell wall murein, and thus plays a role in cell wall recycling. In Roseobacter denitrificans (strain ATCC 33942 / OCh 114) (Erythrobacter sp. (strain OCh 114)), this protein is Anhydro-N-acetylmuramic acid kinase.